Reading from the N-terminus, the 249-residue chain is Selenoprotein BthD (249 aa).

The segment at M1 to L22 is disordered. Over residues K8 to G19 the composition is skewed to basic and acidic residues. Residues C34 to U37 constitute a cross-link (cysteinyl-selenocysteine (Cys-Sec); redox-active). U37 is a non-standard amino acid (selenocysteine). The disordered stretch occupies residues Q122–R249. S147 carries the phosphoserine modification. Positions E175–K198 are enriched in basic and acidic residues. A compositionally biased stretch (basic residues) spans T199–A210.

As to expression, expressed in the developing salivary gland at late stages of embryogenesis. Also expressed in brain, neuroblast and wing disk.

It localises to the cytoplasm. The protein localises to the secreted. May be involved in a redox-related process. Required for survival and specifically for salivary gland morphogenesis. In Drosophila melanogaster (Fruit fly), this protein is Selenoprotein BthD (BthD).